Here is a 384-residue protein sequence, read N- to C-terminus: DNA dC-&gt;dU-editing enzyme APOBEC-3G (384 aa).

The tract at residues Met1 to Phe60 is essential for cytoplasmic localization. CMP/dCMP-type deaminase domains lie at Arg29–Leu138 and Gly214–Leu328. Thr32 carries the post-translational modification Phosphothreonine; by PKA. Residues His65, Cys97, and Cys100 each coordinate Zn(2+). The necessary for homooligomerization stretch occupies residues Glu209 to Ser336. The interval Glu213–Arg215 is interaction with DNA. The residue at position 218 (Thr218) is a Phosphothreonine; by PKA and CAMK2. A Zn(2+)-binding site is contributed by His257. Glu259 (proton donor) is an active-site residue. Residues Cys288 and Cys291 each coordinate Zn(2+). The interaction with DNA stretch occupies residues Arg313–Arg320.

The protein belongs to the cytidine and deoxycytidylate deaminase family. In terms of assembly, homodimer. It depends on Zn(2+) as a cofactor.

Its subcellular location is the cytoplasm. The protein resides in the nucleus. It localises to the P-body. The enzyme catalyses a 2'-deoxycytidine in single-stranded DNA + H2O + H(+) = a 2'-deoxyuridine in single-stranded DNA + NH4(+). In terms of biological role, DNA deaminase (cytidine deaminase) which acts as an inhibitor of retrovirus replication and retrotransposon mobility. After the penetration of retroviral nucleocapsids into target cells of infection and the initiation of reverse transcription, it can induce the conversion of cytosine to uracil in the minus-sense single-strand viral DNA, leading to G-to-A hypermutations in the subsequent plus-strand viral DNA. The resultant detrimental levels of mutations in the proviral genome, along with a deamination-independent mechanism that works prior to the proviral integration, together exert efficient antiretroviral effects in infected target cells. Selectively targets single-stranded DNA and does not deaminate double-stranded DNA or single- or double-stranded RNA. The protein is DNA dC-&gt;dU-editing enzyme APOBEC-3G (APOBEC3G) of Pongo pygmaeus (Bornean orangutan).